Reading from the N-terminus, the 349-residue chain is Ureidoglycolate dehydrogenase (NAD(+)) (349 aa).

His-116 serves as the catalytic Proton acceptor. NAD(+)-binding positions include Ser-140, 174-176, Lys-224, and 306-308; these read DMA and GQD.

The protein belongs to the LDH2/MDH2 oxidoreductase family. As to quaternary structure, homodimer.

Its subcellular location is the cytoplasm. It catalyses the reaction (S)-ureidoglycolate + NAD(+) = N-carbamoyl-2-oxoglycine + NADH + H(+). The protein operates within nitrogen metabolism; (S)-allantoin degradation; oxalurate from (S)-ureidoglycolate: step 1/1. AllD plays a pivotal role as a metabolic branch-point enzyme in nitrogen utilization via the assimilation of allantoin. It is able to utilize allantoin as a sole source of nitrogen under anaerobic conditions. Catalyzes the oxidation of ureidoglycolate to oxalurate. This Escherichia coli O157:H7 protein is Ureidoglycolate dehydrogenase (NAD(+)).